Consider the following 388-residue polypeptide: Processive diacylglycerol beta-glucosyltransferase (388 aa).

Belongs to the glycosyltransferase 28 family. UgtP subfamily.

It is found in the cell membrane. The catalysed reaction is a 1,2-diacyl-3-O-(beta-D-glucopyranosyl)-sn-glycerol + UDP-alpha-D-glucose = a 1,2-diacyl-3-O-(beta-D-Glc-(1-&gt;6)-beta-D-Glc)-sn-glycerol + UDP + H(+). It carries out the reaction a 1,2-diacyl-3-O-(beta-D-Glc-(1-&gt;6)-beta-D-Glc)-sn-glycerol + UDP-alpha-D-glucose = a 1,2-diacyl-3-O-(beta-D-Glc-(1-&gt;6)-beta-D-Glc-(1-&gt;6)-beta-D-Glc)-sn-glycerol + UDP + H(+). It catalyses the reaction a 1,2-diacyl-sn-glycerol + UDP-alpha-D-glucose = a 1,2-diacyl-3-O-(beta-D-glucopyranosyl)-sn-glycerol + UDP + H(+). It functions in the pathway glycolipid metabolism; diglucosyl-diacylglycerol biosynthesis. In terms of biological role, processive glucosyltransferase involved in the biosynthesis of both the bilayer- and non-bilayer-forming membrane glucolipids. Is able to successively transfer up to three glucosyl residues to diacylglycerol (DAG), thereby catalyzing the formation of beta-monoglucosyl-DAG (3-O-(beta-D-glucopyranosyl)-1,2-diacyl-sn-glycerol), beta-diglucosyl-DAG (3-O-(beta-D-glucopyranosyl-beta-(1-&gt;6)-D-glucopyranosyl)-1,2-diacyl-sn-glycerol) and beta-triglucosyl-DAG (3-O-(beta-D-glucopyranosyl-beta-(1-&gt;6)-D-glucopyranosyl-beta-(1-&gt;6)-D-glucopyranosyl)-1,2-diacyl-sn-glycerol). Beta-diglucosyl-DAG is the predominant glycolipid found in Bacillales and is also used as a membrane anchor for lipoteichoic acid (LTA). The polypeptide is Processive diacylglycerol beta-glucosyltransferase (Bacillus cytotoxicus (strain DSM 22905 / CIP 110041 / 391-98 / NVH 391-98)).